Here is a 227-residue protein sequence, read N- to C-terminus: 2,3-bisphosphoglycerate-dependent phosphoglycerate mutase (227 aa).

Substrate contacts are provided by residues 7–14, 20–21, R59, 86–89, K97, 113–114, and 182–183; these read RHGFSEWN, TG, ERHY, RR, and GN. The active-site Tele-phosphohistidine intermediate is the H8. The Proton donor/acceptor role is filled by E86.

The protein belongs to the phosphoglycerate mutase family. BPG-dependent PGAM subfamily. As to quaternary structure, homodimer.

The enzyme catalyses (2R)-2-phosphoglycerate = (2R)-3-phosphoglycerate. It participates in carbohydrate degradation; glycolysis; pyruvate from D-glyceraldehyde 3-phosphate: step 3/5. Catalyzes the interconversion of 2-phosphoglycerate and 3-phosphoglycerate. In Actinobacillus pleuropneumoniae serotype 5b (strain L20), this protein is 2,3-bisphosphoglycerate-dependent phosphoglycerate mutase.